The following is a 154-amino-acid chain: Protein X (154 aa).

The interval 68 to 117 is mitochondrial targeting sequence; the sequence is PCALRFTSARCMETTVNAHQILPKVLHKRTLGLPAMSTTDLEAYFKDCVF.

The protein belongs to the orthohepadnavirus protein X family. May form homodimer. May interact with host CEBPA, CFLAR, CREB1, DDB1, E4F1, HBXIP, HSPD1/HSP60, NFKBIA, POLR2E and SMAD4. Interacts with host SMC5-SMC6 complex and induces its degradation. Interacts with host TRPC4AP; leading to prevent ubiquitination of TRPC4AP. Interacts with host PLSCR1; this interaction promotes ubiquitination and degradation of HBx and impairs HBx-mediated cell proliferation. A fraction may be phosphorylated in insect cells and HepG2 cells, a human hepatoblastoma cell line. Phosphorylated in vitro by host protein kinase C or mitogen-activated protein kinase. N-acetylated in insect cells.

The protein localises to the host cytoplasm. It is found in the host nucleus. Its subcellular location is the host mitochondrion. Functionally, multifunctional protein that plays a role in silencing host antiviral defenses and promoting viral transcription. Does not seem to be essential for HBV infection. May be directly involved in development of cirrhosis and liver cancer (hepatocellular carcinoma). Most of cytosolic activities involve modulation of cytosolic calcium. The effect on apoptosis is controversial depending on the cell types in which the studies have been conducted. May induce apoptosis by localizing in mitochondria and causing loss of mitochondrial membrane potential. May also modulate apoptosis by binding host CFLAR, a key regulator of the death-inducing signaling complex (DISC). Promotes viral transcription by using the host E3 ubiquitin ligase DDB1 to target the SMC5-SMC6 complex to proteasomal degradation. This host complex would otherwise bind to viral episomal DNA, and prevents its transcription. Moderately stimulates transcription of many different viral and cellular transcription elements. Promoters and enhancers stimulated by HBx contain DNA binding sites for NF-kappa-B, AP-1, AP-2, c-EBP, ATF/CREB, or the calcium-activated factor NF-AT. This is Protein X from Homo sapiens (Human).